The chain runs to 58 residues: Sec-independent protein translocase protein TatA (58 aa).

The chain crosses the membrane as a helical span at residues 1-21 (MLSNIGFPGLILILVAILILF).

It belongs to the TatA/E family. In terms of assembly, forms a complex with TatC.

The protein localises to the cell membrane. Part of the twin-arginine translocation (Tat) system that transports large folded proteins containing a characteristic twin-arginine motif in their signal peptide across membranes. TatA could form the protein-conducting channel of the Tat system. This chain is Sec-independent protein translocase protein TatA, found in Bacillus cytotoxicus (strain DSM 22905 / CIP 110041 / 391-98 / NVH 391-98).